Reading from the N-terminus, the 382-residue chain is Intermediate transcription factor 3 large subunit (382 aa).

It belongs to the poxviruses A23 family. In terms of assembly, heterodimer of a 45 kDa and a 32 kDa subunit.

In terms of biological role, acts with RNA polymerase to initiate transcription from intermediate gene promoters. The chain is Intermediate transcription factor 3 large subunit (VITF3L) from Monkeypox virus (strain Zaire-96-I-16) (MPX).